The primary structure comprises 740 residues: Catalase-peroxidase (740 aa).

A cross-link (tryptophyl-tyrosyl-methioninium (Trp-Tyr) (with M-256)) is located at residues 102–229 (WHAAGTYRTG…LAAIQMGLIY (128 aa)). Residue His-103 is the Proton acceptor of the active site. The segment at 111 to 130 (GDGRGGSSSGQQRFAPLNSW) is disordered. The tryptophyl-tyrosyl-methioninium (Tyr-Met) (with W-102) cross-link spans 229–256 (YVNPEGPGGDPHDPEGMARDMRETFARM). His-271 lines the heme b pocket.

The protein belongs to the peroxidase family. Peroxidase/catalase subfamily. In terms of assembly, homodimer or homotetramer. The cofactor is heme b. Formation of the three residue Trp-Tyr-Met cross-link is important for the catalase, but not the peroxidase activity of the enzyme.

The catalysed reaction is H2O2 + AH2 = A + 2 H2O. It carries out the reaction 2 H2O2 = O2 + 2 H2O. In terms of biological role, bifunctional enzyme with both catalase and broad-spectrum peroxidase activity. The chain is Catalase-peroxidase from Erythrobacter litoralis (strain HTCC2594).